A 787-amino-acid chain; its full sequence is DNA ligase (787 aa).

Residues 32–36 (DAEYD), 81–82 (SL), and glutamate 121 each bind NAD(+). Catalysis depends on lysine 123, which acts as the N6-AMP-lysine intermediate. NAD(+) is bound by residues arginine 144, glutamate 181, lysine 297, and lysine 321. Positions 415, 418, 445, and 451 each coordinate Zn(2+). The BRCT domain occupies 703–787 (VEGLPLAGQT…RLTELGVAVD (85 aa)).

It belongs to the NAD-dependent DNA ligase family. LigA subfamily. Mg(2+) is required as a cofactor. Requires Mn(2+) as cofactor.

The catalysed reaction is NAD(+) + (deoxyribonucleotide)n-3'-hydroxyl + 5'-phospho-(deoxyribonucleotide)m = (deoxyribonucleotide)n+m + AMP + beta-nicotinamide D-nucleotide.. Functionally, DNA ligase that catalyzes the formation of phosphodiester linkages between 5'-phosphoryl and 3'-hydroxyl groups in double-stranded DNA using NAD as a coenzyme and as the energy source for the reaction. It is essential for DNA replication and repair of damaged DNA. The protein is DNA ligase of Pseudomonas syringae pv. tomato (strain ATCC BAA-871 / DC3000).